The following is a 208-amino-acid chain: Outer-membrane lipoprotein LolB (208 aa).

Residues 1–17 (MIRRLLGVALLTGAITG) form the signal peptide. Residue cysteine 18 is the site of N-palmitoyl cysteine attachment. A lipid anchor (S-diacylglycerol cysteine) is attached at cysteine 18.

Belongs to the LolB family. As to quaternary structure, monomer.

The protein resides in the cell outer membrane. In terms of biological role, plays a critical role in the incorporation of lipoproteins in the outer membrane after they are released by the LolA protein. This chain is Outer-membrane lipoprotein LolB, found in Marinobacter nauticus (strain ATCC 700491 / DSM 11845 / VT8) (Marinobacter aquaeolei).